The following is a 259-amino-acid chain: Ribonuclease HII (259 aa).

The RNase H type-2 domain occupies 70 to 258; sequence TLIAGIDEVG…VKSLVLGKKE (189 aa). A divalent metal cation is bound by residues Asp76, Glu77, and Asp168.

This sequence belongs to the RNase HII family. Mn(2+) is required as a cofactor. Requires Mg(2+) as cofactor.

The protein resides in the cytoplasm. It carries out the reaction Endonucleolytic cleavage to 5'-phosphomonoester.. Endonuclease that specifically degrades the RNA of RNA-DNA hybrids. The protein is Ribonuclease HII of Streptococcus pneumoniae serotype 4 (strain ATCC BAA-334 / TIGR4).